The sequence spans 103 residues: uncharacterized protein (103 aa).

An N-terminal signal peptide occupies residues 1-13; it reads MLLSSIVSFVADA. A glycan (N-linked (GlcNAc...) asparagine) is linked at asparagine 67. Positions 73–103 are disordered; it reads LSSDSNRNIIDNSNNNQHPSSSSTSTSWKKF.

The protein resides in the secreted. This is an uncharacterized protein from Dictyostelium discoideum (Social amoeba).